A 626-amino-acid chain; its full sequence is (R)-linalool synthase 2, chloroplastic (626 aa).

The transit peptide at 1–21 (MAFVSIAPLASRCCVHKSFVS) directs the protein to the chloroplast. 3 residues coordinate Mg(2+): D377, D381, and E529. The DDXXD motif signature appears at 377–381 (DDIYD).

It belongs to the terpene synthase family. Tpsd subfamily. It depends on Mg(2+) as a cofactor. Mn(2+) serves as cofactor.

The protein resides in the plastid. Its subcellular location is the chloroplast. The enzyme catalyses (2E)-geranyl diphosphate + H2O = (R)-linalool + diphosphate. The protein operates within terpene metabolism; oleoresin biosynthesis. In terms of biological role, terpene synthase (mono-TPS) involved in the biosynthesis of monoterpene natural products included in conifer oleoresin secretions and volatile emissions; these compounds contribute to biotic and abiotic stress defense against herbivores and pathogens. Catalyzes the conversion of (2E)-geranyl diphosphate (GPP) to (R)-linalool. The protein is (R)-linalool synthase 2, chloroplastic of Picea sitchensis (Sitka spruce).